A 30-amino-acid chain; its full sequence is GIPCAESCVYIPCTITALLGCKCQDKVCYD.

The segment at residues 1–30 (GIPCAESCVYIPCTITALLGCKCQDKVCYD) is a cross-link (cyclopeptide (Gly-Asp)). Disulfide bonds link C4-C21, C8-C23, and C13-C28.

This is a cyclic peptide.

In terms of biological role, probably participates in a plant defense mechanism. In Oldenlandia affinis, this protein is Kalata-B16.